A 461-amino-acid chain; its full sequence is Cysteine--tRNA ligase (461 aa).

Cysteine 29 is a Zn(2+) binding site. A 'HIGH' region motif is present at residues 31-41; sequence MTIYDLCHVGH. Zn(2+) is bound by residues cysteine 213, histidine 238, and glutamate 242. A 'KMSKS' region motif is present at residues 274–278; that stretch reads KMSKS. Lysine 277 is a binding site for ATP.

This sequence belongs to the class-I aminoacyl-tRNA synthetase family. In terms of assembly, monomer. Zn(2+) is required as a cofactor.

The protein resides in the cytoplasm. It carries out the reaction tRNA(Cys) + L-cysteine + ATP = L-cysteinyl-tRNA(Cys) + AMP + diphosphate. This is Cysteine--tRNA ligase from Methylibium petroleiphilum (strain ATCC BAA-1232 / LMG 22953 / PM1).